The sequence spans 79 residues: MIAGMPALTHKQQQDAVERIQELMSEGMSSGQAIAQVAAEIRQEHQGDNVAVMFDEDDDTVNDSDEEHYFDDGEEEDEQ.

Positions 54-79 (FDEDDDTVNDSDEEHYFDDGEEEDEQ) are disordered.

This sequence belongs to the UPF0181 family.

This chain is UPF0181 protein PC1_1931, found in Pectobacterium carotovorum subsp. carotovorum (strain PC1).